A 354-amino-acid polypeptide reads, in one-letter code: Homer protein homolog 1 (354 aa).

Residues 1 to 110 form the WH1 domain; the sequence is MGEQPIFSTR…EKFQEFKEAA (110 aa). The residue at position 2 (G2) is an N-acetylglycine. Residues 114 to 172 form a disordered region; sequence KEKSQEKMELTSTPSQESAGGDLQSPLTPESINGTDDERTPDLTQNSEPRPEPTQNALP. Composition is skewed to polar residues over residues 138 to 147 and 155 to 172; these read SPLTPESING and DLTQNSEPRPEPTQNALP. A coiled-coil region spans residues 181-352; that stretch reads KHWEAELATL…LRDNLAKLLE (172 aa). Positions 290–354 are required for tetramerization; that stretch reads KLQEVEIRNK…DNLAKLLERS (65 aa). S306 is modified (phosphoserine).

The protein belongs to the Homer family. In terms of assembly, tetramer; this tetrameric structure is critical for forming the high-order complex with SHANK1, which in turn is necessary for the structural and functional integrity of dendritic spines. Interacts with GRM1, GRM5, ITPR1, DNM3, RYR1, RYR2 and SHANK3. Interacts with IFT57 and OPHN1. Encodes a coiled-coil structure that mediates homo- and heteromultimerization. Interacts with SHANK1; forms high-order polymerized complex with a mesh-like network structure, at least composed of SHANK1, HOMER1 and DLGAP1; the complex formation is SHANK1 multimerization dependent. Interacts with NFATC4. Interacts with DAGLA (via PPXXF motif); this interaction is required for the cell membrane localization of DAGLA. Interacts with SRGAP2.

Its subcellular location is the cytoplasm. It localises to the postsynaptic density. The protein resides in the synapse. It is found in the cell projection. The protein localises to the dendritic spine. Postsynaptic density scaffolding protein. Binds and cross-links cytoplasmic regions of GRM1, GRM5, ITPR1, DNM3, RYR1, RYR2, SHANK1 and SHANK3. By physically linking GRM1 and GRM5 with ER-associated ITPR1 receptors, it aids the coupling of surface receptors to intracellular calcium release. May also couple GRM1 to PI3 kinase through its interaction with AGAP2. Forms a high-order complex with SHANK1, which in turn is necessary for the structural and functional integrity of dendritic spines. Negatively regulates T cell activation by inhibiting the calcineurin-NFAT pathway. Acts by competing with calcineurin/PPP3CA for NFAT protein binding, hence preventing NFAT activation by PPP3CA. This Bos taurus (Bovine) protein is Homer protein homolog 1.